The sequence spans 395 residues: Succinyl-diaminopimelate desuccinylase (395 aa).

His74 is a Zn(2+) binding site. Asp76 is a catalytic residue. Residue Asp107 participates in Zn(2+) binding. Glu141 (proton acceptor) is an active-site residue. Zn(2+)-binding residues include Glu142, Glu170, and His368.

The protein belongs to the peptidase M20A family. DapE subfamily. Homodimer. Zn(2+) is required as a cofactor. Requires Co(2+) as cofactor.

It carries out the reaction N-succinyl-(2S,6S)-2,6-diaminopimelate + H2O = (2S,6S)-2,6-diaminopimelate + succinate. It functions in the pathway amino-acid biosynthesis; L-lysine biosynthesis via DAP pathway; LL-2,6-diaminopimelate from (S)-tetrahydrodipicolinate (succinylase route): step 3/3. Functionally, catalyzes the hydrolysis of N-succinyl-L,L-diaminopimelic acid (SDAP), forming succinate and LL-2,6-diaminopimelate (DAP), an intermediate involved in the bacterial biosynthesis of lysine and meso-diaminopimelic acid, an essential component of bacterial cell walls. The chain is Succinyl-diaminopimelate desuccinylase from Brucella melitensis biotype 2 (strain ATCC 23457).